The primary structure comprises 217 residues: Octanoyltransferase (217 aa).

Residues 34–216 (SETRDELWLL…AASRASRHDR (183 aa)) enclose the BPL/LPL catalytic domain. Substrate is bound by residues 73–80 (RGGQVTWH), 140–142 (ALG), and 153–155 (GLS). Cysteine 171 serves as the catalytic Acyl-thioester intermediate.

It belongs to the LipB family.

The protein localises to the cytoplasm. The enzyme catalyses octanoyl-[ACP] + L-lysyl-[protein] = N(6)-octanoyl-L-lysyl-[protein] + holo-[ACP] + H(+). It participates in protein modification; protein lipoylation via endogenous pathway; protein N(6)-(lipoyl)lysine from octanoyl-[acyl-carrier-protein]: step 1/2. Functionally, catalyzes the transfer of endogenously produced octanoic acid from octanoyl-acyl-carrier-protein onto the lipoyl domains of lipoate-dependent enzymes. Lipoyl-ACP can also act as a substrate although octanoyl-ACP is likely to be the physiological substrate. In Halorhodospira halophila (strain DSM 244 / SL1) (Ectothiorhodospira halophila (strain DSM 244 / SL1)), this protein is Octanoyltransferase.